Reading from the N-terminus, the 428-residue chain is Serine--tRNA ligase (428 aa).

233–235 (TAE) lines the L-serine pocket. ATP is bound at residue 264 to 266 (RRE). An L-serine-binding site is contributed by glutamate 287. 351-354 (EVSS) is an ATP binding site. Serine 387 is an L-serine binding site.

This sequence belongs to the class-II aminoacyl-tRNA synthetase family. Type-1 seryl-tRNA synthetase subfamily. As to quaternary structure, homodimer. The tRNA molecule binds across the dimer.

It is found in the cytoplasm. The enzyme catalyses tRNA(Ser) + L-serine + ATP = L-seryl-tRNA(Ser) + AMP + diphosphate + H(+). It catalyses the reaction tRNA(Sec) + L-serine + ATP = L-seryl-tRNA(Sec) + AMP + diphosphate + H(+). The protein operates within aminoacyl-tRNA biosynthesis; selenocysteinyl-tRNA(Sec) biosynthesis; L-seryl-tRNA(Sec) from L-serine and tRNA(Sec): step 1/1. Functionally, catalyzes the attachment of serine to tRNA(Ser). Is also able to aminoacylate tRNA(Sec) with serine, to form the misacylated tRNA L-seryl-tRNA(Sec), which will be further converted into selenocysteinyl-tRNA(Sec). In Salinibacter ruber (strain DSM 13855 / M31), this protein is Serine--tRNA ligase.